Reading from the N-terminus, the 75-residue chain is RNA-binding protein KhpA (75 aa).

A KH domain is found at 29 to 75 (SIILELKVSPEDMGKVIGKQGRIAKAIRTVVKAAAIKENKKVVVEII).

Belongs to the KhpA RNA-binding protein family. Forms a complex with KhpB.

It is found in the cytoplasm. Functionally, a probable RNA chaperone. Forms a complex with KhpB which binds to cellular RNA and controls its expression. Plays a role in peptidoglycan (PG) homeostasis and cell length regulation. This Clostridium perfringens (strain 13 / Type A) protein is RNA-binding protein KhpA.